A 395-amino-acid polypeptide reads, in one-letter code: Probable L-tyrosine/L-aspartate decarboxylase (395 aa).

At Lys242 the chain carries N6-(pyridoxal phosphate)lysine.

It belongs to the group II decarboxylase family. MfnA subfamily. Pyridoxal 5'-phosphate serves as cofactor.

It carries out the reaction L-tyrosine + H(+) = tyramine + CO2. The enzyme catalyses L-aspartate + H(+) = beta-alanine + CO2. Its pathway is cofactor biosynthesis; methanofuran biosynthesis. It functions in the pathway cofactor biosynthesis; coenzyme A biosynthesis. Its function is as follows. Catalyzes the decarboxylation of L-tyrosine to produce tyramine for methanofuran biosynthesis. Can also catalyze the decarboxylation of L-aspartate to produce beta-alanine for coenzyme A (CoA) biosynthesis. The protein is Probable L-tyrosine/L-aspartate decarboxylase of Methanosarcina acetivorans (strain ATCC 35395 / DSM 2834 / JCM 12185 / C2A).